The sequence spans 315 residues: Olfactory receptor 11A1 (315 aa).

Over 1 to 27 (MEIVSTGNETITEFVLLGFYDIPELHF) the chain is Extracellular. N-linked (GlcNAc...) asparagine glycosylation occurs at Asn8. Residues 28-48 (LFFIVFTAVYVFIIIGNMLII) traverse the membrane as a helical segment. The Cytoplasmic segment spans residues 49-56 (VAVVSSQR). A helical transmembrane segment spans residues 57–77 (LHKPMYIFLANLSFLDILYTS). The Extracellular segment spans residues 78 to 100 (AVMPKMLEGFLQEATISVAGCLL). A disulfide bond links Cys98 and Cys190. The helical transmembrane segment at 101-121 (QFFIFGSLATAECLLLAVMAY) threads the bilayer. Topologically, residues 122 to 140 (DRYLAICYPLHYPLLMGPR) are cytoplasmic. Residues 141-161 (RYMGLVVTTWLSGFVVDGLVV) form a helical membrane-spanning segment. Residues 162–198 (ALVAQLRFCGPNHIDQFYCDFMLFVGLACSDPRVAQV) lie on the Extracellular side of the membrane. A helical transmembrane segment spans residues 199-218 (TTLILSVFCLTIPFGLILTS). Topologically, residues 219–238 (YARIVVAVLRVPAGASRRRA) are cytoplasmic. Residues 239–259 (FSTCSSHLAVVTTFYGTLMIF) form a helical membrane-spanning segment. Topologically, residues 260-272 (YVAPSAVHSQLLS) are extracellular. The helical transmembrane segment at 273 to 293 (KVFSLLYTVVTPLFNPVIYTM) threads the bilayer. The Cytoplasmic portion of the chain corresponds to 294 to 315 (RNKEVHQALRKILCIKQTETLD).

The protein belongs to the G-protein coupled receptor 1 family.

Its subcellular location is the cell membrane. In terms of biological role, odorant receptor. This is Olfactory receptor 11A1 (OR11A1) from Homo sapiens (Human).